The primary structure comprises 1079 residues: Tudor domain-containing protein 7A (1079 aa).

The HTH OST-type 1 domain occupies 3-76 (DVELVKKMLR…TGEVMCFAGV (74 aa)). The interval 153 to 175 (LPSSRAPAWQMNRKSPVPEKTSV) is disordered. 2 HTH OST-type domains span residues 205 to 270 (DVEL…RLVY) and 366 to 434 (LTTE…ILYT). Tudor domains lie at 519–576 (SPKI…FMTL) and 708–765 (RPFC…FLKE).

The protein belongs to the TDRD7 family.

It localises to the cytoplasm. Its function is as follows. Component of specific cytoplasmic RNA granules involved in post-transcriptional regulation of specific genes: probably acts by binding to specific mRNAs and regulating their translation. Probably required during spermatogenesis. Required for structural integrity of granules in primordial germ cells (PGCs). The protein is Tudor domain-containing protein 7A (tdrd7a) of Danio rerio (Zebrafish).